A 736-amino-acid polypeptide reads, in one-letter code: Prolyl oligopeptidase dbiP (736 aa).

Active-site charge relay system residues include serine 572, aspartate 656, and histidine 692.

It belongs to the peptidase S9A family. Monomer.

It carries out the reaction Hydrolysis of Pro-|-Xaa &gt;&gt; Ala-|-Xaa in oligopeptides.. The protein operates within mycotoxin biosynthesis. Functionally, prolyl oligopeptidase; part of the gene cluster that mediates the biosynthesis of dendrothelin A, a highly methylated cyclic dodecapeptide showing slight nematodicidal activity. Excises and catalyzes the macrocyclization of the methylated core peptide of dbiMA to yield dendrothelin A. DbiP works in a two-step fashion with an initial cleavage at the N-terminus, followed by a second cleavage at the C-terminus of the core peptide. According to this mechanism, the free N-terminus of the core peptide, generated by the first cleavage, attacks the covalent intermediate of the second cleavage, which results in macrocyclization of the core peptide. The sequence is that of Prolyl oligopeptidase dbiP from Dendrothele bispora (strain CBS 962.96).